The sequence spans 432 residues: MSKSADLFAKAQKIIPGGVNSPVRAFAGVGGSPLFIERADGAYIFDADGKAYIDYVGSWGPMILGHNHVAVRDAVIKAAQQGLSFGAPTEMEITMAELVSKLVPSMEQIRMVSSGTEATMSAIRLARGFTNRDKIIKFEGCYHGHADCLLVKAGSGALTLGQPNSPGVPADFAKHTLTCTYNDLETVREAFAAHPEQIACIIVEPVAGNMNCIPPVPGFLEGLRTICDDFGALLILDEVMTGFRVSEGGAQGYYNIKPDLTTLGKIIGGGMPVGAFGGRKDIMQYIAPTGPVYQAGTLSGNPVAMAAGHACLSVLTEEGNEKRLANTTKILANGFKSLADKYNIPLAINQVGGMFGFFFTEQKTVTSYADVTKCDIERFKRFFNLMLKSGVYLAPSAYEACFTSLAHGDKEIEATLNAAERAFATLAKEANA.

Lys265 is modified (N6-(pyridoxal phosphate)lysine).

It belongs to the class-III pyridoxal-phosphate-dependent aminotransferase family. HemL subfamily. Homodimer. It depends on pyridoxal 5'-phosphate as a cofactor.

The protein localises to the cytoplasm. It catalyses the reaction (S)-4-amino-5-oxopentanoate = 5-aminolevulinate. It participates in porphyrin-containing compound metabolism; protoporphyrin-IX biosynthesis; 5-aminolevulinate from L-glutamyl-tRNA(Glu): step 2/2. The chain is Glutamate-1-semialdehyde 2,1-aminomutase from Photobacterium profundum (strain SS9).